We begin with the raw amino-acid sequence, 457 residues long: Bifunctional protein GlmU (457 aa).

Positions methionine 1 to arginine 232 are pyrophosphorylase. UDP-N-acetyl-alpha-D-glucosamine is bound by residues leucine 9–glycine 12, lysine 23, glutamine 75, and glycine 80–threonine 81. Aspartate 105 is a binding site for Mg(2+). The UDP-N-acetyl-alpha-D-glucosamine site is built by glycine 142, glutamate 157, asparagine 172, and asparagine 230. Residue asparagine 230 coordinates Mg(2+). The tract at residues valine 233–alanine 253 is linker. The interval glycine 254–lysine 457 is N-acetyltransferase. UDP-N-acetyl-alpha-D-glucosamine-binding residues include arginine 336 and lysine 354. Histidine 366 functions as the Proton acceptor in the catalytic mechanism. UDP-N-acetyl-alpha-D-glucosamine contacts are provided by tyrosine 369 and asparagine 380. Residues asparagine 389–tyrosine 390, serine 408, alanine 426, and arginine 443 each bind acetyl-CoA.

This sequence in the N-terminal section; belongs to the N-acetylglucosamine-1-phosphate uridyltransferase family. In the C-terminal section; belongs to the transferase hexapeptide repeat family. In terms of assembly, homotrimer. Mg(2+) is required as a cofactor.

The protein resides in the cytoplasm. The enzyme catalyses alpha-D-glucosamine 1-phosphate + acetyl-CoA = N-acetyl-alpha-D-glucosamine 1-phosphate + CoA + H(+). It carries out the reaction N-acetyl-alpha-D-glucosamine 1-phosphate + UTP + H(+) = UDP-N-acetyl-alpha-D-glucosamine + diphosphate. The protein operates within nucleotide-sugar biosynthesis; UDP-N-acetyl-alpha-D-glucosamine biosynthesis; N-acetyl-alpha-D-glucosamine 1-phosphate from alpha-D-glucosamine 6-phosphate (route II): step 2/2. It participates in nucleotide-sugar biosynthesis; UDP-N-acetyl-alpha-D-glucosamine biosynthesis; UDP-N-acetyl-alpha-D-glucosamine from N-acetyl-alpha-D-glucosamine 1-phosphate: step 1/1. Its pathway is bacterial outer membrane biogenesis; LPS lipid A biosynthesis. Its function is as follows. Catalyzes the last two sequential reactions in the de novo biosynthetic pathway for UDP-N-acetylglucosamine (UDP-GlcNAc). The C-terminal domain catalyzes the transfer of acetyl group from acetyl coenzyme A to glucosamine-1-phosphate (GlcN-1-P) to produce N-acetylglucosamine-1-phosphate (GlcNAc-1-P), which is converted into UDP-GlcNAc by the transfer of uridine 5-monophosphate (from uridine 5-triphosphate), a reaction catalyzed by the N-terminal domain. The sequence is that of Bifunctional protein GlmU from Geotalea daltonii (strain DSM 22248 / JCM 15807 / FRC-32) (Geobacter daltonii).